The sequence spans 127 residues: Glycine cleavage system H protein 2 (127 aa).

A Lipoyl-binding domain is found at 24–105 (SVTVGISDHA…PYGSWIFKLK (82 aa)). K65 is modified (N6-lipoyllysine).

This sequence belongs to the GcvH family. In terms of assembly, the glycine cleavage system is composed of four proteins: P, T, L and H. (R)-lipoate serves as cofactor.

In terms of biological role, the glycine cleavage system catalyzes the degradation of glycine. The H protein shuttles the methylamine group of glycine from the P protein to the T protein. In Pseudomonas putida (strain ATCC 47054 / DSM 6125 / CFBP 8728 / NCIMB 11950 / KT2440), this protein is Glycine cleavage system H protein 2.